Consider the following 206-residue polypeptide: Small ribosomal subunit protein uS4A (206 aa).

Positions 98–163 (MRLDNVVYRL…SERFKMFAEN (66 aa)) constitute an S4 RNA-binding domain.

The protein belongs to the universal ribosomal protein uS4 family. As to quaternary structure, part of the 30S ribosomal subunit. Contacts protein S5. The interaction surface between S4 and S5 is involved in control of translational fidelity.

In terms of biological role, one of the primary rRNA binding proteins, it binds directly to 16S rRNA where it nucleates assembly of the body of the 30S subunit. With S5 and S12 plays an important role in translational accuracy. The chain is Small ribosomal subunit protein uS4A from Clostridium perfringens (strain ATCC 13124 / DSM 756 / JCM 1290 / NCIMB 6125 / NCTC 8237 / Type A).